We begin with the raw amino-acid sequence, 228 residues long: Protein K8.1 (228 aa).

An N-terminal signal peptide occupies residues 1–26; it reads MSSTQIRTEIPVALLILCLCLVACHA. N-linked (GlcNAc...) asparagine; by host glycans are attached at residues N55, N60, N70, and N85. The tract at residues 77–113 is disordered; it reads GSPSSEYPNVSVSVEDTSASGSGEDAIDESGSGEEER. Positions 78–97 are enriched in polar residues; it reads SPSSEYPNVSVSVEDTSASG. A helical membrane pass occupies residues 197 to 217; it reads LYILWAVGLLLGLVLILYLCV.

The protein localises to the host membrane. The polypeptide is Protein K8.1 (K8.1) (Human herpesvirus 8 type P (isolate GK18) (HHV-8)).